The primary structure comprises 435 residues: GTPase Der (435 aa).

EngA-type G domains are found at residues 4-167 (PVVA…GDKA) and 175-350 (IRFS…ENQT). Residues 10 to 17 (GRPNVGKS), 57 to 61 (DTGGI), 119 to 122 (NKAD), 181 to 188 (GRPNVGKS), 228 to 232 (DTAGI), and 293 to 296 (NKWD) contribute to the GTP site. Positions 351 to 435 (RRIQSSVLND…PIKILARKRK (85 aa)) constitute a KH-like domain.

The protein belongs to the TRAFAC class TrmE-Era-EngA-EngB-Septin-like GTPase superfamily. EngA (Der) GTPase family. In terms of assembly, associates with the 50S ribosomal subunit.

In terms of biological role, GTPase that plays an essential role in the late steps of ribosome biogenesis. In Lactobacillus johnsonii (strain CNCM I-12250 / La1 / NCC 533), this protein is GTPase Der.